A 484-amino-acid polypeptide reads, in one-letter code: L-carnitine dehydrogenase/betainyl-CoA thioesterase (484 aa).

The tract at residues 1 to 322 is L-carnitine dehydrogenase; it reads MKIAAIGGGV…ENRFYARNGK (322 aa). 7–12 serves as a coordination point for NAD(+); sequence GGGVIG. The tract at residues 323–484 is betainyl-CoA thioesterase; it reads VQADYPLRLH…RAVRLKETSA (162 aa).

It in the N-terminal section; belongs to the 3-hydroxyacyl-CoA dehydrogenase family. L-carnitine dehydrogenase subfamily. The protein in the C-terminal section; belongs to the betainyl-CoA thioesterase family. In terms of assembly, homodimer.

The protein resides in the cytoplasm. The catalysed reaction is carnitine + NAD(+) = 3-dehydrocarnitine + NADH + H(+). The enzyme catalyses N,N,N-trimethylglycyl-CoA + H2O = glycine betaine + CoA + H(+). It participates in amine and polyamine metabolism; carnitine metabolism. Its function is as follows. Multifunctional enzyme that catalyzes the NAD(+)-dependent oxidation of L-carnitine to 3-dehydrocarnitine and the cleavage of betainyl-CoA (N,N,N-trimethylglycyl-CoA) into glycine betaine and coenzyme A. The polypeptide is L-carnitine dehydrogenase/betainyl-CoA thioesterase (Agrobacterium fabrum (strain C58 / ATCC 33970) (Agrobacterium tumefaciens (strain C58))).